The chain runs to 79 residues: Calcium/calmodulin-dependent protein kinase II inhibitor 2 (79 aa).

Residues Met1–Gly21 are disordered. Residues Lys43–Lys69 are inhibitory domain.

Belongs to the CAMK2N family. As to quaternary structure, interacts with CAMK2A and CAMK2B in the presence of Ca(2+)/calmodulin or after autophosphorylation.

The protein localises to the nucleus. It localises to the cytoplasm. The protein resides in the cytosol. Its subcellular location is the synapse. In terms of biological role, potent and specific cellular inhibitor of CaM-kinase II (CAMK2). Traps Ca(2+)/calmodulin on CAMK2. The protein is Calcium/calmodulin-dependent protein kinase II inhibitor 2 (CAMK2N2) of Bos taurus (Bovine).